Consider the following 119-residue polypeptide: Hydrogenase maturation factor HypA (119 aa).

Ni(2+) is bound at residue His-2. Residues Cys-73, Cys-76, Cys-89, and Cys-92 each coordinate Zn(2+).

The protein belongs to the HypA/HybF family.

Functionally, involved in the maturation of [NiFe] hydrogenases. Required for nickel insertion into the metal center of the hydrogenase. The polypeptide is Hydrogenase maturation factor HypA (Dehalococcoides mccartyi (strain CBDB1)).